The sequence spans 508 residues: Bifunctional purine biosynthesis protein PurH (508 aa).

One can recognise an MGS-like domain in the interval 1–144; sequence MTRALLSVSD…KNFASVLPIV (144 aa).

It belongs to the PurH family.

It carries out the reaction (6R)-10-formyltetrahydrofolate + 5-amino-1-(5-phospho-beta-D-ribosyl)imidazole-4-carboxamide = 5-formamido-1-(5-phospho-D-ribosyl)imidazole-4-carboxamide + (6S)-5,6,7,8-tetrahydrofolate. The enzyme catalyses IMP + H2O = 5-formamido-1-(5-phospho-D-ribosyl)imidazole-4-carboxamide. It participates in purine metabolism; IMP biosynthesis via de novo pathway; 5-formamido-1-(5-phospho-D-ribosyl)imidazole-4-carboxamide from 5-amino-1-(5-phospho-D-ribosyl)imidazole-4-carboxamide (10-formyl THF route): step 1/1. It functions in the pathway purine metabolism; IMP biosynthesis via de novo pathway; IMP from 5-formamido-1-(5-phospho-D-ribosyl)imidazole-4-carboxamide: step 1/1. In Leuconostoc mesenteroides subsp. mesenteroides (strain ATCC 8293 / DSM 20343 / BCRC 11652 / CCM 1803 / JCM 6124 / NCDO 523 / NBRC 100496 / NCIMB 8023 / NCTC 12954 / NRRL B-1118 / 37Y), this protein is Bifunctional purine biosynthesis protein PurH.